The primary structure comprises 31 residues: GIIPCGESCVFIPCITSVVGCSCKSKVCYKN.

The segment at residues 1-31 is a cross-link (cyclopeptide (Gly-Asn)); the sequence is GIIPCGESCVFIPCITSVVGCSCKSKVCYKN. 3 cysteine pairs are disulfide-bonded: Cys-5/Cys-21, Cys-9/Cys-23, and Cys-14/Cys-28.

It belongs to the cyclotide family. Bracelet subfamily. In terms of processing, this is a cyclic peptide.

In terms of biological role, probably participates in a plant defense mechanism. The chain is Cyclotide vpub-B from Viola pubescens (Downy yellow violet).